We begin with the raw amino-acid sequence, 244 residues long: tRNA (guanine-N(1)-)-methyltransferase (244 aa).

Residues G123 and 143-148 each bind S-adenosyl-L-methionine; that span reads LGDFVM.

The protein belongs to the RNA methyltransferase TrmD family. Homodimer.

The protein localises to the cytoplasm. The catalysed reaction is guanosine(37) in tRNA + S-adenosyl-L-methionine = N(1)-methylguanosine(37) in tRNA + S-adenosyl-L-homocysteine + H(+). Specifically methylates guanosine-37 in various tRNAs. In Ruegeria sp. (strain TM1040) (Silicibacter sp.), this protein is tRNA (guanine-N(1)-)-methyltransferase.